Here is a 453-residue protein sequence, read N- to C-terminus: Probable glycine dehydrogenase (decarboxylating) subunit 1 (453 aa).

The protein belongs to the GcvP family. N-terminal subunit subfamily. As to quaternary structure, the glycine cleavage system is composed of four proteins: P, T, L and H. In this organism, the P 'protein' is a heterodimer of two subunits.

The enzyme catalyses N(6)-[(R)-lipoyl]-L-lysyl-[glycine-cleavage complex H protein] + glycine + H(+) = N(6)-[(R)-S(8)-aminomethyldihydrolipoyl]-L-lysyl-[glycine-cleavage complex H protein] + CO2. The glycine cleavage system catalyzes the degradation of glycine. The P protein binds the alpha-amino group of glycine through its pyridoxal phosphate cofactor; CO(2) is released and the remaining methylamine moiety is then transferred to the lipoamide cofactor of the H protein. The polypeptide is Probable glycine dehydrogenase (decarboxylating) subunit 1 (Dictyoglomus thermophilum (strain ATCC 35947 / DSM 3960 / H-6-12)).